The primary structure comprises 386 residues: Probable protein phosphatase 2C 36 (386 aa).

The 304-residue stretch at 60–363 (ELSVAVVQGN…DDITVIVLFI (304 aa)) folds into the PPM-type phosphatase domain. Residues Asp94, Gly95, Asp295, and Asp354 each contribute to the Mn(2+) site.

The protein belongs to the PP2C family. Mg(2+) serves as cofactor. The cofactor is Mn(2+).

It carries out the reaction O-phospho-L-seryl-[protein] + H2O = L-seryl-[protein] + phosphate. It catalyses the reaction O-phospho-L-threonyl-[protein] + H2O = L-threonyl-[protein] + phosphate. This Oryza sativa subsp. japonica (Rice) protein is Probable protein phosphatase 2C 36.